A 144-amino-acid chain; its full sequence is Oxoglutarate dehydrogenase inhibitor (144 aa).

Thr-14 carries the phosphothreonine modification. In terms of domain architecture, FHA spans 68 to 117 (TAAGRHPDSDIFLDDVTVSRRHAEFRRNGDQYEVVDVGSLNGTYVNREPK).

The protein resides in the cytoplasm. In terms of biological role, an essential component of the PknG signaling pathway. When unphosphorylated, it inhibits the activity of 2-oxoglutarate dehydrogenase. When phosphorylated it does not inhibit 2-oxoglutarate dehydrogenase. The sequence is that of Oxoglutarate dehydrogenase inhibitor (odhI) from Corynebacterium jeikeium (strain K411).